The following is a 438-amino-acid chain: UDP-N-acetylmuramoylalanine--D-glutamate ligase (438 aa).

112–118 contacts ATP; sequence GSNGKST.

It belongs to the MurCDEF family.

It localises to the cytoplasm. The enzyme catalyses UDP-N-acetyl-alpha-D-muramoyl-L-alanine + D-glutamate + ATP = UDP-N-acetyl-alpha-D-muramoyl-L-alanyl-D-glutamate + ADP + phosphate + H(+). It functions in the pathway cell wall biogenesis; peptidoglycan biosynthesis. In terms of biological role, cell wall formation. Catalyzes the addition of glutamate to the nucleotide precursor UDP-N-acetylmuramoyl-L-alanine (UMA). The chain is UDP-N-acetylmuramoylalanine--D-glutamate ligase from Yersinia pseudotuberculosis serotype I (strain IP32953).